The following is a 1117-amino-acid chain: Cytospin-A (1117 aa).

3 disordered regions span residues 1–176 (MKKA…NQIS), 293–323 (SLSP…GSVE), and 358–390 (SSDD…NASE). Positions 45 to 90 (TAASLSKTKSSDDLLAGMAGGVTVTNGVKGKKSTCPSAAPSASAPA) are enriched in low complexity. Residues 93 to 117 (TVENKSKISTGTASSTKRNTSTGNK) are compositionally biased toward polar residues. Basic and acidic residues-rich tracts occupy residues 120-131 (SSTRERLRERTR) and 158-171 (TATE…KSKS). Positions 168-280 (KSKSDNQISD…LNALGFSLEQ (113 aa)) form a coiled coil. The span at 293–303 (SLSPEITPGNQ) shows a compositional bias: polar residues. The span at 358–377 (SSDDALDAPSSSESEGIPSI) shows a compositional bias: low complexity. 3 positions are modified to phosphoserine: Ser384, Ser385, and Ser389. 2 coiled-coil regions span residues 394 to 449 (ACLT…MESL) and 487 to 807 (RYME…RGRV). A phosphoserine mark is found at Ser868, Ser881, and Ser887. The disordered stretch occupies residues 919–1001 (RTSSASRPAS…SRIREERKDP (83 aa)). Positions 946–956 (RSSEEMKRDIS) are enriched in basic and acidic residues. Low complexity predominate over residues 971-990 (TTSPQLSLSSSPTASVTPTT). Residues 1011–1116 (GSKRNALLKW…YVTAIYKYFE (106 aa)) enclose the Calponin-homology (CH) domain.

Belongs to the cytospin-A family. May interact with both microtubules and actin cytoskeleton.

The protein localises to the cytoplasm. Its subcellular location is the cytoskeleton. It is found in the spindle. The protein resides in the cell junction. It localises to the gap junction. Functionally, involved in cytokinesis and spindle organization. May play a role in actin cytoskeleton organization and microtubule stabilization and hence required for proper cell adhesion and migration. The protein is Cytospin-A (SPECC1L) of Pan troglodytes (Chimpanzee).